A 70-amino-acid polypeptide reads, in one-letter code: U2-agatoxin-Ao1p (70 aa).

A signal peptide spans Met-1–Ala-20. Positions Val-21 to Arg-34 are excised as a propeptide. 3 cysteine pairs are disulfide-bonded: Cys-37–Cys-53, Cys-44–Cys-58, and Cys-52–Cys-68. Position 69 is a leucine amide (Leu-69).

It belongs to the neurotoxin 01 (U2-agtx) family. Expressed by the venom gland.

The protein resides in the secreted. Insect active toxin causing rapid but reversible paralysis in crickets. No activity shown in mammals. Does not show effect on mammalian voltage-gated calcium channels. This is U2-agatoxin-Ao1p from Agelena orientalis (Funnel-web spider).